A 512-amino-acid chain; its full sequence is ATP synthase subunit alpha (512 aa).

Residue 169-176 coordinates ATP; sequence GDRQTGKT.

It belongs to the ATPase alpha/beta chains family. F-type ATPases have 2 components, CF(1) - the catalytic core - and CF(0) - the membrane proton channel. CF(1) has five subunits: alpha(3), beta(3), gamma(1), delta(1), epsilon(1). CF(0) has three main subunits: a(1), b(2) and c(9-12). The alpha and beta chains form an alternating ring which encloses part of the gamma chain. CF(1) is attached to CF(0) by a central stalk formed by the gamma and epsilon chains, while a peripheral stalk is formed by the delta and b chains.

The protein localises to the cell inner membrane. The catalysed reaction is ATP + H2O + 4 H(+)(in) = ADP + phosphate + 5 H(+)(out). Produces ATP from ADP in the presence of a proton gradient across the membrane. The alpha chain is a regulatory subunit. The sequence is that of ATP synthase subunit alpha from Rickettsia canadensis (strain McKiel).